A 338-amino-acid chain; its full sequence is Glycerol-3-phosphate dehydrogenase [NAD(P)+] (338 aa).

NADPH contacts are provided by Ser12, Trp13, and Lys110. Residues Lys110, Gly141, and Ser143 each contribute to the sn-glycerol 3-phosphate site. Ala145 is a binding site for NADPH. Positions 196, 249, 259, 260, and 261 each coordinate sn-glycerol 3-phosphate. The active-site Proton acceptor is the Lys196. Arg260 contributes to the NADPH binding site. Positions 284 and 286 each coordinate NADPH.

Belongs to the NAD-dependent glycerol-3-phosphate dehydrogenase family.

It is found in the cytoplasm. It carries out the reaction sn-glycerol 3-phosphate + NAD(+) = dihydroxyacetone phosphate + NADH + H(+). The enzyme catalyses sn-glycerol 3-phosphate + NADP(+) = dihydroxyacetone phosphate + NADPH + H(+). The protein operates within membrane lipid metabolism; glycerophospholipid metabolism. Its function is as follows. Catalyzes the reduction of the glycolytic intermediate dihydroxyacetone phosphate (DHAP) to sn-glycerol 3-phosphate (G3P), the key precursor for phospholipid synthesis. The polypeptide is Glycerol-3-phosphate dehydrogenase [NAD(P)+] (Pediococcus pentosaceus (strain ATCC 25745 / CCUG 21536 / LMG 10740 / 183-1w)).